We begin with the raw amino-acid sequence, 279 residues long: Putative ABC transporter ATP-binding protein CA_C1368 (279 aa).

The ABC transporter domain occupies 4–239 (ISINNVDYIY…KKVLRNINLR (236 aa)). An ATP-binding site is contributed by 37-44 (GPNGAGKS).

This sequence belongs to the ABC transporter superfamily.

It is found in the cell membrane. Probably part of an ABC transporter complex. Responsible for energy coupling to the transport system. The chain is Putative ABC transporter ATP-binding protein CA_C1368 from Clostridium acetobutylicum (strain ATCC 824 / DSM 792 / JCM 1419 / IAM 19013 / LMG 5710 / NBRC 13948 / NRRL B-527 / VKM B-1787 / 2291 / W).